The sequence spans 185 residues: Sulfopyruvate decarboxylase subunit beta (185 aa).

This sequence belongs to the TPP enzyme family. As to quaternary structure, heterododecamer composed of 6 subunits alpha and 6 subunits beta. Requires thiamine diphosphate as cofactor.

The enzyme catalyses 3-sulfopyruvate + H(+) = sulfoacetaldehyde + CO2. It participates in cofactor biosynthesis; coenzyme M biosynthesis; sulfoacetaldehyde from phosphoenolpyruvate and sulfite: step 4/4. In terms of biological role, involved in the biosynthesis of the coenzyme M (2-mercaptoethanesulfonic acid). Catalyzes the decarboxylation of sulfopyruvate to sulfoacetaldehyde. The protein is Sulfopyruvate decarboxylase subunit beta of Methanococcus maripaludis (strain DSM 14266 / JCM 13030 / NBRC 101832 / S2 / LL).